A 163-amino-acid chain; its full sequence is Thiol peroxidase (163 aa).

Positions 16 to 162 constitute a Thioredoxin domain; sequence LQVGDTAHDF…YDAAIAAVKS (147 aa). The active-site Cysteine sulfenic acid (-SOH) intermediate is the Cys-58. Cys-58 and Cys-92 are disulfide-bonded.

This sequence belongs to the peroxiredoxin family. Tpx subfamily. Homodimer.

It catalyses the reaction a hydroperoxide + [thioredoxin]-dithiol = an alcohol + [thioredoxin]-disulfide + H2O. Thiol-specific peroxidase that catalyzes the reduction of hydrogen peroxide and organic hydroperoxides to water and alcohols, respectively. Plays a role in cell protection against oxidative stress by detoxifying peroxides. This chain is Thiol peroxidase, found in Streptococcus sanguinis.